The primary structure comprises 204 residues: Tetraspanin-13 (204 aa).

At methionine 1–leucine 19 the chain is on the cytoplasmic side. The helical transmembrane segment at tyrosine 20–isoleucine 40 threads the bilayer. At serine 41 to arginine 44 the chain is on the extracellular side. Residues valine 45–isoleucine 65 traverse the membrane as a helical segment. Topologically, residues glycine 66 to glutamine 72 are cytoplasmic. A helical membrane pass occupies residues valine 73–serine 93. The Extracellular portion of the chain corresponds to cysteine 94–arginine 167. 2 N-linked (GlcNAc...) asparagine glycosylation sites follow: asparagine 113 and asparagine 137. Residue serine 143 is modified to Phosphoserine. A helical transmembrane segment spans residues phenylalanine 168–tyrosine 188. Topologically, residues arginine 189–leucine 204 are cytoplasmic.

It belongs to the tetraspanin (TM4SF) family.

Its subcellular location is the membrane. The sequence is that of Tetraspanin-13 (TSPAN13) from Bos taurus (Bovine).